The following is a 540-amino-acid chain: L-aspartate oxidase (540 aa).

Residues S16–A19, K38, S45–G52, N161–A162, and D223 contribute to the FAD site. Succinate-binding positions include H244 and T259–E260. The active-site Proton donor/acceptor is R290. E375 lines the FAD pocket. S389 is a succinate binding site. FAD is bound at residue S391–L392.

This sequence belongs to the FAD-dependent oxidoreductase 2 family. NadB subfamily. In terms of assembly, monomer. Homodimer. Both the monomeric and dimeric forms of the enzyme are catalytically active. The cofactor is FAD.

The protein resides in the cytoplasm. It carries out the reaction L-aspartate + O2 = iminosuccinate + H2O2. The catalysed reaction is fumarate + L-aspartate = iminosuccinate + succinate. Its pathway is cofactor biosynthesis; NAD(+) biosynthesis; iminoaspartate from L-aspartate (oxidase route): step 1/1. Its activity is regulated as follows. Inhibited by the product iminoaspartate. Competitively inhibited by mesotartrate. NAD acts as a competitive inhibitor to FAD. Inhibited by iodoacetic acid, diethylpyrocarbonate and tetranitromethane. Functionally, catalyzes the oxidation of L-aspartate to iminoaspartate, the first step in the de novo biosynthesis of NAD(+). Can use either oxygen or fumarate as electron acceptors, which allows the enzyme to be functional under aerobic and anaerobic conditions. In vivo, fumarate is used under anaerobic conditions, and oxygen is the predominant electron acceptor under aerobic conditions due to the lower fumarate levels. In vitro, fumarate is a more efficient electron acceptor and is kinetically superior to oxygen. The chain is L-aspartate oxidase from Escherichia coli (strain K12).